We begin with the raw amino-acid sequence, 146 residues long: Phospholipase A2 147 (146 aa).

The N-terminal stretch at 1–19 (MYPAHLLVLLAVCVSLLGA) is a signal peptide. Positions 20-27 (ASVPPQPL) are excised as a propeptide. 7 disulfide bridges follow: Cys-38–Cys-98, Cys-54–Cys-145, Cys-56–Cys-72, Cys-71–Cys-126, Cys-78–Cys-119, Cys-87–Cys-112, and Cys-105–Cys-117. Ca(2+)-binding residues include Tyr-55, Gly-57, and Gly-59. Residue His-75 is part of the active site. Position 76 (Asp-76) interacts with Ca(2+). Asp-120 is an active-site residue.

It belongs to the phospholipase A2 family. Group I subfamily. D49 sub-subfamily. The cofactor is Ca(2+). In terms of tissue distribution, expressed by the venom gland.

It is found in the secreted. The catalysed reaction is a 1,2-diacyl-sn-glycero-3-phosphocholine + H2O = a 1-acyl-sn-glycero-3-phosphocholine + a fatty acid + H(+). Functionally, snake venom phospholipase A2 (PLA2) that inhibits collagen-induced platelet aggregation. PLA2 catalyzes the calcium-dependent hydrolysis of the 2-acyl groups in 3-sn-phosphoglycerides. In Drysdalia coronoides (White-lipped snake), this protein is Phospholipase A2 147.